Reading from the N-terminus, the 270-residue chain is Phthiotriol/phenolphthiotriol dimycocerosates methyltransferase (270 aa).

This sequence belongs to the methyltransferase superfamily. Phthiotriol/phenolphthiotriol dimycocerosates methyltransferase family.

Functionally, catalyzes the methylation of the lipid moiety of the intermediate compounds phthiotriol and glycosylated phenolphthiotriol dimycoserosates to form phthiocerol dimycocerosates (DIM A) and glycosylated phenolphthiocerol dimycocerosates (PGL). The sequence is that of Phthiotriol/phenolphthiotriol dimycocerosates methyltransferase from Mycobacterium bovis (strain ATCC BAA-935 / AF2122/97).